The chain runs to 285 residues: Sulfotransferase 2A1 (285 aa).

Positions 44, 45, 46, 47, 48, and 49 each coordinate 3'-phosphoadenylyl sulfate. Residue H99 is the Proton acceptor of the active site. 3'-phosphoadenylyl sulfate-binding residues include R121, S129, Y184, S218, M223, R247, K248, and G249.

This sequence belongs to the sulfotransferase 1 family. Homodimer. In terms of tissue distribution, highly expressed in liver.

The protein resides in the cytoplasm. It catalyses the reaction an alcohol + 3'-phosphoadenylyl sulfate = an alkyl sulfate + adenosine 3',5'-bisphosphate + H(+). The enzyme catalyses taurolithocholate + 3'-phosphoadenylyl sulfate = taurolithocholate 3-sulfate + adenosine 3',5'-bisphosphate + H(+). It carries out the reaction pregnenolone + 3'-phosphoadenylyl sulfate = pregnenolone sulfate + adenosine 3',5'-bisphosphate + H(+). The catalysed reaction is 3beta-hydroxyandrost-5-en-17-one + 3'-phosphoadenylyl sulfate = dehydroepiandrosterone 3-sulfate + adenosine 3',5'-bisphosphate + H(+). It catalyses the reaction lithocholate + 3'-phosphoadenylyl sulfate = lithocholate sulfate + adenosine 3',5'-bisphosphate + H(+). The enzyme catalyses (24S)-hydroxycholesterol + 3'-phosphoadenylyl sulfate = (24S)-hydroxycholesterol 24-sulfate + adenosine 3',5'-bisphosphate + H(+). It carries out the reaction (24S)-hydroxycholesterol + 3'-phosphoadenylyl sulfate = (24S)-hydroxycholesterol 3-sulfate + adenosine 3',5'-bisphosphate + H(+). The catalysed reaction is (24S)-hydroxycholesterol 24-sulfate + 3'-phosphoadenylyl sulfate = (24S)-hydroxycholesterol 3,24-disulfate + adenosine 3',5'-bisphosphate + H(+). It catalyses the reaction androsterone + 3'-phosphoadenylyl sulfate = androsterone 3alpha-sulfate + adenosine 3',5'-bisphosphate + H(+). Sulfotransferase that utilizes 3'-phospho-5'-adenylyl sulfate (PAPS) as sulfonate donor to catalyze the sulfonation of steroids and bile acids in the liver and adrenal glands. Mediates the sulfation of a wide range of steroids and sterols, including pregnenolone, androsterone, DHEA, bile acids, cholesterol and as well many xenobiotics that contain alcohol and phenol functional groups. Sulfonation increases the water solubility of most compounds, and therefore their renal excretion, but it can also result in bioactivation to form active metabolites. Plays an important role in maintening steroid and lipid homeostasis. Plays a key role in bile acid metabolism. In addition, catalyzes the metabolic activation of potent carcinogenic polycyclic arylmethanols. The chain is Sulfotransferase 2A1 (Sult2a1) from Mus musculus (Mouse).